We begin with the raw amino-acid sequence, 101 residues long: NAD(P)H-quinone oxidoreductase subunit 4L, chloroplastic (101 aa).

Transmembrane regions (helical) follow at residues 2–22 (MFEH…YGLI), 32–52 (ICLE…SDLF), and 61–81 (IFAI…LSIL).

The protein belongs to the complex I subunit 4L family. In terms of assembly, NDH is composed of at least 16 different subunits, 5 of which are encoded in the nucleus.

The protein resides in the plastid. The protein localises to the chloroplast thylakoid membrane. The enzyme catalyses a plastoquinone + NADH + (n+1) H(+)(in) = a plastoquinol + NAD(+) + n H(+)(out). It carries out the reaction a plastoquinone + NADPH + (n+1) H(+)(in) = a plastoquinol + NADP(+) + n H(+)(out). Its function is as follows. NDH shuttles electrons from NAD(P)H:plastoquinone, via FMN and iron-sulfur (Fe-S) centers, to quinones in the photosynthetic chain and possibly in a chloroplast respiratory chain. The immediate electron acceptor for the enzyme in this species is believed to be plastoquinone. Couples the redox reaction to proton translocation, and thus conserves the redox energy in a proton gradient. The chain is NAD(P)H-quinone oxidoreductase subunit 4L, chloroplastic from Oryza nivara (Indian wild rice).